The following is an 873-amino-acid chain: Inner centromere protein A (873 aa).

Disordered regions lie at residues 50–124, 237–270, 282–452, 484–535, 566–649, 683–736, and 781–800; these read AEPE…KRMT, PANE…VVRK, FSLA…PPPH, KRNT…KVRR, QIDE…LAEQ, LERA…EQAA, and DLNS…PIPA. A compositionally biased stretch (basic residues) spans 60–69; that stretch reads SQKRRRKKRT. Positions 87 to 105 are enriched in low complexity; that stretch reads RQSNASWSSSVRRLSVRNQ. Residues 239-254 show a composition bias toward polar residues; that stretch reads NEQQLNLSNQSATPTG. Residues 261-270 are compositionally biased toward basic residues; the sequence is SVRRSLVVRK. The span at 286-297 shows a compositional bias: basic and acidic residues; it reads SKRESMTREAVR. Residues 314–325 are compositionally biased toward low complexity; sequence SSTSSQRSYQSS. The segment covering 437-452 has biased composition (pro residues); that stretch reads PSPPCPPSKIVRPPPH. 4 stretches are compositionally biased toward basic and acidic residues: residues 491-535, 566-584, 591-649, and 683-733; these read TDPK…KVRR, QIDE…EEKA, KKQE…LAEQ, and LERA…KAKE. Residues 494 to 707 form an SAH region; the sequence is KTEEKERQRL…EERKKREQQE (214 aa). Residues 782–856 form an IN box region; sequence LNSDDSTDDE…RTSSAVWHSP (75 aa). A phosphoserine mark is found at serine 849 and serine 850.

This sequence belongs to the INCENP family. As to quaternary structure, component of the CPC composed of survivin/birc5, incenp, cdca8/borealin and/or cdca9/dasra-A, and aurkb/aurora-B. Interacts (via C-terminus) with aurkb (via N-terminus and kinase domain). Interacts (via N-terminus) with birc5.1, birc5.2, cdca8 and cdca9. Interacts with mtus1.

It localises to the nucleus. The protein localises to the chromosome. The protein resides in the centromere. It is found in the cytoplasm. Its subcellular location is the cytoskeleton. It localises to the spindle. The protein localises to the midbody. The protein resides in the kinetochore. In terms of biological role, component of the chromosomal passenger complex (CPC), a complex that acts as a key regulator of mitosis. The CPC complex has essential functions at the centromere in ensuring correct chromosome alignment and segregation and is required for chromatin-induced microtubule stabilization and spindle assembly. Acts as a scaffold regulating CPC localization and activity. The C-terminus associates with aurkb/aurora-B, the N-terminus associated with cdca8/borealin and/or cdca9/dasra-A tethers the CPC to the inner centromere, and the microtubule binding activity within the central SAH domain directs aurkb/aurora-B toward substrates near microtubules. Activates aurkb. The protein is Inner centromere protein A (incenp-a) of Xenopus laevis (African clawed frog).